A 473-amino-acid chain; its full sequence is Argininosuccinate lyase (473 aa).

This sequence belongs to the lyase 1 family. Argininosuccinate lyase subfamily.

Its subcellular location is the cytoplasm. The catalysed reaction is 2-(N(omega)-L-arginino)succinate = fumarate + L-arginine. It functions in the pathway amino-acid biosynthesis; L-arginine biosynthesis; L-arginine from L-ornithine and carbamoyl phosphate: step 3/3. The protein is Argininosuccinate lyase of Streptomyces clavuligerus.